A 1018-amino-acid polypeptide reads, in one-letter code: Unconventional myosin-Ig (1018 aa).

Methionine 1 bears the N-acetylmethionine mark. In terms of domain architecture, Myosin motor spans 9 to 707 (YGKPDFVLLD…TLVTLEQSRA (699 aa)). 102-109 (GESGAGKT) is a binding site for ATP. Residues 584 to 606 (MVALVENLASKEPFYVRCIKPNE) are actin-binding. The IQ domain maps to 710 to 739 (IPIIVLLLQKAWRGTLARWRCRRLRAIYTI). The TH1 domain occupies 824-1017 (GLRQDWGCRR…RGSFTLLWPS (194 aa)).

The protein belongs to the TRAFAC class myosin-kinesin ATPase superfamily. Myosin family. In terms of assembly, interacts with calmodulin; via its IQ motifs. Specifically expressed in hematopoietic cells.

It is found in the cell membrane. The protein resides in the cell projection. Its subcellular location is the phagocytic cup. Functionally, unconventional myosin required during immune response for detection of rare antigen-presenting cells by regulating T-cell migration. Unconventional myosins are actin-based motor molecules with ATPase activity and serve in intracellular movements. Acts as a regulator of T-cell migration by generating membrane tension, enforcing cell-intrinsic meandering search, thereby enhancing detection of rare antigens during lymph-node surveillance, enabling pathogen eradication. Also required in B-cells, where it regulates different membrane/cytoskeleton-dependent processes. Involved in Fc-gamma receptor (Fc-gamma-R) phagocytosis. Its function is as follows. Constitutes the minor histocompatibility antigen HA-2. More generally, minor histocompatibility antigens (mHags) refer to immunogenic peptide which, when complexed with MHC, can generate an immune response after recognition by specific T-cells. The peptides are derived from polymorphic intracellular proteins, which are cleaved by normal pathways of antigen processing. The binding of these peptides to MHC class I or class II molecules and their expression on the cell surface can stimulate T-cell responses and thereby trigger graft rejection or graft-versus-host disease (GVHD) after hematopoietic stem cell transplantation from HLA-identical sibling donor. GVHD is a frequent complication after bone marrow transplantation (BMT), due to mismatch of minor histocompatibility antigen in HLA-matched sibling marrow transplants. HA-2 is restricted to MHC class I HLA-A*0201. The protein is Unconventional myosin-Ig (MYO1G) of Homo sapiens (Human).